A 905-amino-acid polypeptide reads, in one-letter code: Protein translocase subunit SecA (905 aa).

ATP is bound by residues Q86, G104–T108, and D499. The Zn(2+) site is built by C890, C892, C901, and H902.

This sequence belongs to the SecA family. Monomer and homodimer. Part of the essential Sec protein translocation apparatus which comprises SecA, SecYEG and auxiliary proteins SecDF-YajC and YidC. It depends on Zn(2+) as a cofactor.

The protein resides in the cell inner membrane. Its subcellular location is the cytoplasm. The enzyme catalyses ATP + H2O + cellular proteinSide 1 = ADP + phosphate + cellular proteinSide 2.. In terms of biological role, part of the Sec protein translocase complex. Interacts with the SecYEG preprotein conducting channel. Has a central role in coupling the hydrolysis of ATP to the transfer of proteins into and across the cell membrane, serving both as a receptor for the preprotein-SecB complex and as an ATP-driven molecular motor driving the stepwise translocation of polypeptide chains across the membrane. In Rickettsia typhi (strain ATCC VR-144 / Wilmington), this protein is Protein translocase subunit SecA.